The following is a 77-amino-acid chain: Translation initiation factor IF-1, chloroplastic (77 aa).

The region spanning 1-71 is the S1-like domain; the sequence is MKEQKWIHEG…TRGRIIYRLR (71 aa).

It belongs to the IF-1 family. In terms of assembly, component of the 30S ribosomal translation pre-initiation complex which assembles on the 30S ribosome in the order IF-2 and IF-3, IF-1 and N-formylmethionyl-tRNA(fMet); mRNA recruitment can occur at any time during PIC assembly.

It localises to the plastid. It is found in the chloroplast. Its function is as follows. One of the essential components for the initiation of protein synthesis. Stabilizes the binding of IF-2 and IF-3 on the 30S subunit to which N-formylmethionyl-tRNA(fMet) subsequently binds. Helps modulate mRNA selection, yielding the 30S pre-initiation complex (PIC). Upon addition of the 50S ribosomal subunit IF-1, IF-2 and IF-3 are released leaving the mature 70S translation initiation complex. This is Translation initiation factor IF-1, chloroplastic from Hedera helix (English ivy).